The sequence spans 425 residues: Serine hydroxymethyltransferase (425 aa).

(6S)-5,6,7,8-tetrahydrofolate-binding positions include Leu-128 and 132 to 134; that span reads GHL. An N6-(pyridoxal phosphate)lysine modification is found at Lys-237.

This sequence belongs to the SHMT family. Homodimer. It depends on pyridoxal 5'-phosphate as a cofactor.

It is found in the cytoplasm. The enzyme catalyses (6R)-5,10-methylene-5,6,7,8-tetrahydrofolate + glycine + H2O = (6S)-5,6,7,8-tetrahydrofolate + L-serine. It functions in the pathway one-carbon metabolism; tetrahydrofolate interconversion. The protein operates within amino-acid biosynthesis; glycine biosynthesis; glycine from L-serine: step 1/1. Its function is as follows. Catalyzes the reversible interconversion of serine and glycine with tetrahydrofolate (THF) serving as the one-carbon carrier. This reaction serves as the major source of one-carbon groups required for the biosynthesis of purines, thymidylate, methionine, and other important biomolecules. Also exhibits THF-independent aldolase activity toward beta-hydroxyamino acids, producing glycine and aldehydes, via a retro-aldol mechanism. The chain is Serine hydroxymethyltransferase from Wolbachia pipientis subsp. Culex pipiens (strain wPip).